Reading from the N-terminus, the 88-residue chain is Large ribosomal subunit protein bL27 (88 aa).

The segment at 1 to 25 (MAHKKGASSSSNGRDSEAKRLGVKR) is disordered.

The protein belongs to the bacterial ribosomal protein bL27 family.

The sequence is that of Large ribosomal subunit protein bL27 from Corynebacterium diphtheriae (strain ATCC 700971 / NCTC 13129 / Biotype gravis).